The chain runs to 337 residues: tRNA N6-adenosine threonylcarbamoyltransferase (337 aa).

Residues H111 and H115 each contribute to the Fe cation site. Substrate-binding positions include 134–138 (LVSGG), D167, G180, and N272. Fe cation is bound at residue D300.

This sequence belongs to the KAE1 / TsaD family. It depends on Fe(2+) as a cofactor.

Its subcellular location is the cytoplasm. The enzyme catalyses L-threonylcarbamoyladenylate + adenosine(37) in tRNA = N(6)-L-threonylcarbamoyladenosine(37) in tRNA + AMP + H(+). Functionally, required for the formation of a threonylcarbamoyl group on adenosine at position 37 (t(6)A37) in tRNAs that read codons beginning with adenine. Is involved in the transfer of the threonylcarbamoyl moiety of threonylcarbamoyl-AMP (TC-AMP) to the N6 group of A37, together with TsaE and TsaB. TsaD likely plays a direct catalytic role in this reaction. The polypeptide is tRNA N6-adenosine threonylcarbamoyltransferase (Escherichia coli (strain K12 / MC4100 / BW2952)).